The following is a 436-amino-acid chain: Putative UDP-arabinose 4-epimerase 4 (436 aa).

Residues 1–20 (MLNSSGVRTQRRSPRPLSLG) are disordered. Residues 1 to 60 (MLNSSGVRTQRRSPRPLSLGGRKIITPTKFAYDHHNPDKVLDFVEMDCLEPKTKNNLTGK) lie on the Cytoplasmic side of the membrane. The chain crosses the membrane as a helical; Signal-anchor for type II membrane protein span at residues 61–81 (LLLVASLLILAIIVISQSSSF). Over 82–436 (TSPSAFSQRE…KIHPHGYNSY (355 aa)) the chain is Lumenal. An NAD(+)-binding site is contributed by 96–127 (HVLVTGGAGYIGSHAALRLLRDSYRVTIVDNL). Tyrosine 244 acts as the Proton acceptor in catalysis.

This sequence belongs to the NAD(P)-dependent epimerase/dehydratase family. NAD(+) is required as a cofactor.

The protein resides in the golgi apparatus. It is found in the golgi stack membrane. It carries out the reaction UDP-beta-L-arabinopyranose = UDP-alpha-D-xylose. Its pathway is nucleotide-sugar biosynthesis; UDP-L-arabinose biosynthesis; UDP-L-arabinose from UDP-alpha-D-xylose: step 1/1. It functions in the pathway cell wall biogenesis; cell wall polysaccharide biosynthesis. The protein is Putative UDP-arabinose 4-epimerase 4 of Arabidopsis thaliana (Mouse-ear cress).